Reading from the N-terminus, the 672-residue chain is Rho GTPase-activating protein 40 (672 aa).

The segment at Gly43 to Ser68 is disordered. A compositionally biased stretch (polar residues) spans Gly47 to Pro59. Positions Val321–Trp519 constitute a Rho-GAP domain.

GTPase activator for the Rho-type GTPases by converting them to an inactive GDP-bound state. The sequence is that of Rho GTPase-activating protein 40 from Mus musculus (Mouse).